Reading from the N-terminus, the 622-residue chain is MMSEKTQQRKLAGTKKKFTDYHQWNSAGVGTGATDTKKKKINHGANPETTTSGGCHSPEDKQQNRAQLKEENKASHQHQQALRRQLEAQDHTIRILMCQKTELETALHDSQDAARKFEEDSKDLAARLHHSWHFAGELQRALSAMSAEHERADKYIKELTKEREAMSLELFRNIITNKELKEKNAELQEKLRLVETEKSEIQLHIKELKRKLETDKIPLPQVQTNTLQEKMWRQEEELRDQEELRDQEKLRKHEEKMWRQEQRLRDQEKELREQEQQMQEQEEQMRKQEEQMRKQEEQMRKQEEQMRKQEEQMRKQEEQMRKQEEQMGKQEEQMGEQEEQMRKQEKQMLKQKEQMRKQEEQMWKQEEQIGEQEEQMRKQEEQMWKQEEQIGEQEEQMRKQEEQMWKQEEQMGEQMRKQEEQMGEQEEQIRKQEEQMGEQEEQMRKQEEQMGEQEEQMRKQEEQMGEQEEQMRKQEEQMGEQEEQMGEQEEQMRKQVERLQFKEERLWDEYEKMQEEEEKIRRQVEKRREKKERMGEQEKTQEERCSEPCLPPSKYPSDMSHPGSLEPAREAGKGYSHDNRTAQIMQLPPGMKNAQERPGLGSTSCIPFFYGGDKKKIKIISI.

3 disordered regions span residues 1 to 82, 251 to 496, and 511 to 580; these read MMSE…QQAL, RKHE…RKQV, and EKMQ…HDNR. Basic and acidic residues-rich tracts occupy residues 57 to 74, 251 to 275, 283 to 332, 339 to 367, 374 to 388, and 395 to 420; these read SPED…ENKA, RKHE…REQE, and EQMR…KQEE. A coiled-coil region spans residues 100-534; the sequence is KTELETALHD…EKRREKKERM (435 aa). Positions 477-489 are enriched in acidic residues; sequence QMGEQEEQMGEQE. Basic and acidic residues-rich tracts occupy residues 511–546 and 567–580; these read EKMQ…ERCS and PARE…HDNR.

The protein belongs to the GOLGA6 family.

The sequence is that of Golgin subfamily A member 6-like protein 7 from Homo sapiens (Human).